The sequence spans 159 residues: Keratin-associated protein 9-3 (159 aa).

16 repeat units span residues C8–T12, C13–T17, C32–S36, C37–S41, C46–T50, C51–T55, C56–T60, C61–I65, C70–S74, C75–P79, C80–T84, C85–S89, C129–A133, C134–T138, C139–T143, and C153–S157. A 16 X 5 AA repeats of C-C-[RQVSHE]-[SPTN]-[TASPI] region spans residues C8–S157.

Belongs to the KRTAP type 9 family. As to quaternary structure, interacts with hair keratins.

In terms of biological role, in the hair cortex, hair keratin intermediate filaments are embedded in an interfilamentous matrix, consisting of hair keratin-associated proteins (KRTAP), which are essential for the formation of a rigid and resistant hair shaft through their extensive disulfide bond cross-linking with abundant cysteine residues of hair keratins. The matrix proteins include the high-sulfur and high-glycine-tyrosine keratins. This chain is Keratin-associated protein 9-3 (KRTAP9-3), found in Homo sapiens (Human).